Reading from the N-terminus, the 304-residue chain is Transmembrane protein 178A (304 aa).

A signal peptide spans 1-25 (MESRGLVTAVSLTLSICSLLLLVTA). Topologically, residues 26–186 (IFTDHWYETD…LLHLRRITAG (161 aa)) are extracellular. The N-linked (GlcNAc...) asparagine glycan is linked to asparagine 165. Residues 187-207 (FLGMAAAVLLCGCIVAAISFF) form a helical membrane-spanning segment. Topologically, residues 208–215 (WEESLTQH) are cytoplasmic. The chain crosses the membrane as a helical span at residues 216-236 (VAGLLFLMTGIFCTISLCTYA). Over 237-267 (ASVAYELNRQPKFIYGLPSDVEHGYSWSLFC) the chain is Extracellular. The chain crosses the membrane as a helical span at residues 268 to 288 (AWCSLGLIVAAGCLCTAYPFI). Residues 289-304 (SRTKILHLKFARDSCV) are Cytoplasmic-facing.

The protein belongs to the TMEM178 family.

Its subcellular location is the endoplasmic reticulum membrane. Functionally, may act as a negative regulator of osteoclast differentiation. The protein is Transmembrane protein 178A (tmem178a) of Xenopus laevis (African clawed frog).